Reading from the N-terminus, the 147-residue chain is Large ribosomal subunit protein bL9 (147 aa).

It belongs to the bacterial ribosomal protein bL9 family.

Binds to the 23S rRNA. This is Large ribosomal subunit protein bL9 from Campylobacter jejuni subsp. doylei (strain ATCC BAA-1458 / RM4099 / 269.97).